Here is a 372-residue protein sequence, read N- to C-terminus: MTEQEICVRVTRAAAKRKASTAMGIDGDRVNKKRVVLGELLNVSNVNLLANLNQKKETQKPKRNLKPPPAKQIKSAPVAIIDLESKSDIDSRSDDPQMCGPYVADIYEYLRQLEVKPKQRPLPDYIEKVQKDVTPSMRGVLVDWLVEVAEEYKLGSETLYLTVSHIDRFLSLKTVNKQKLQLVGVSAMLIASKYEEISPPKVDDFCYITDNTFSKQDVVKMEADILLALQFELGRPTINTFMRRFTRVAQDDFKVPHLQLEPLCCYLSELSILDYKTVKFVPSLLAASAVFLARFIIRPKQHPWNQMLEEYTKYKAADLQVCVGIIHDLYLSRRGGALQAVREKYKHHKFQCVATMPVSPELPVTFWEDVTI.

The interval Asn53–Ile73 is disordered.

This sequence belongs to the cyclin family. Cyclin AB subfamily.

This is Cyclin-A3-2 (CYCA3-2) from Arabidopsis thaliana (Mouse-ear cress).